The following is a 635-amino-acid chain: Threonine--tRNA ligase (635 aa).

Residues 1-61 (MINISFPDGS…ENDCKLRILT (61 aa)) form the TGS domain. The interval 242 to 533 (DHRKLGKELD…LIEEYAGCFP (292 aa)) is catalytic. Zn(2+) is bound by residues C333, H384, and H510.

The protein belongs to the class-II aminoacyl-tRNA synthetase family. Homodimer. Zn(2+) is required as a cofactor.

Its subcellular location is the cytoplasm. It catalyses the reaction tRNA(Thr) + L-threonine + ATP = L-threonyl-tRNA(Thr) + AMP + diphosphate + H(+). Its function is as follows. Catalyzes the attachment of threonine to tRNA(Thr) in a two-step reaction: L-threonine is first activated by ATP to form Thr-AMP and then transferred to the acceptor end of tRNA(Thr). Also edits incorrectly charged L-seryl-tRNA(Thr). The polypeptide is Threonine--tRNA ligase (Rickettsia akari (strain Hartford)).